Consider the following 366-residue polypeptide: Anthranilate phosphoribosyltransferase (366 aa).

5-phospho-alpha-D-ribose 1-diphosphate-binding positions include Gly103, 106-107 (GD), Thr111, 113-116 (NLST), 131-139 (KHGNRASSS), and Gly143. Gly103 lines the anthranilate pocket. Residue Ser115 participates in Mg(2+) binding. Asn134 contributes to the anthranilate binding site. Arg189 is a binding site for anthranilate. Asp247 and Glu248 together coordinate Mg(2+).

Belongs to the anthranilate phosphoribosyltransferase family. In terms of assembly, homodimer. Mg(2+) serves as cofactor.

It catalyses the reaction N-(5-phospho-beta-D-ribosyl)anthranilate + diphosphate = 5-phospho-alpha-D-ribose 1-diphosphate + anthranilate. It functions in the pathway amino-acid biosynthesis; L-tryptophan biosynthesis; L-tryptophan from chorismate: step 2/5. In terms of biological role, catalyzes the transfer of the phosphoribosyl group of 5-phosphorylribose-1-pyrophosphate (PRPP) to anthranilate to yield N-(5'-phosphoribosyl)-anthranilate (PRA). The protein is Anthranilate phosphoribosyltransferase of Mycobacterium leprae (strain Br4923).